Consider the following 461-residue polypeptide: Regulatory protein AtoC (461 aa).

The region spanning 6-120 (RILIVDDEDN…ELNLIVQRAL (115 aa)) is the Response regulatory domain. Asp55 bears the 4-aspartylphosphate mark. Position 73 is a phosphohistidine (His73). One can recognise a Sigma-54 factor interaction domain in the interval 145–374 (ILTNSPAMMD…LSNVIERAVV (230 aa)). ATP is bound by residues 173-180 (GESGTGKE) and 236-245 (ANEGTLLLDE). Positions 433–452 (RTRTALMLGISRRALMYKLQ) form a DNA-binding region, H-T-H motif.

Phosphorylated by AtoS. Contains two phosphorylation sites, which are both involved in the transduction of the acetoacetate signal. Asp-55 is probably the primary phosphorylation site, but either both residues can be phosphorylated independently by AtoS or the phosphate group can be transferred between them. In terms of processing, the N-terminus is blocked.

The protein resides in the cytoplasm. Functionally, member of the two-component regulatory system AtoS/AtoC. In the presence of acetoacetate, AtoS/AtoC stimulates the expression of the atoDAEB operon, leading to short chain fatty acid catabolism and activation of the poly-(R)-3-hydroxybutyrate (cPHB) biosynthetic pathway. Also induces the operon in response to spermidine. Involved in the regulation of motility and chemotaxis, via transcriptional induction of the flagellar regulon. AtoC acts by binding directly to the promoter region of the target genes. In addition to its role as a transcriptional regulator, functions as a post-translational regulator that inhibits polyamine biosynthesis via regulation of ornithine decarboxylase (ODC). In Escherichia coli (strain K12), this protein is Regulatory protein AtoC (atoC).